A 1188-amino-acid polypeptide reads, in one-letter code: DNA-directed RNA polymerase subunit beta (1188 aa).

The segment at 1149-1188 (ELRDLDEGEDDDVMHVDDLEKAREKQAQETPEVSENSEEK) is disordered. A compositionally biased stretch (basic and acidic residues) spans 1161–1175 (VMHVDDLEKAREKQA).

It belongs to the RNA polymerase beta chain family. In terms of assembly, the RNAP catalytic core consists of 2 alpha, 1 beta, 1 beta' and 1 omega subunit. When a sigma factor is associated with the core the holoenzyme is formed, which can initiate transcription.

The catalysed reaction is RNA(n) + a ribonucleoside 5'-triphosphate = RNA(n+1) + diphosphate. Functionally, DNA-dependent RNA polymerase catalyzes the transcription of DNA into RNA using the four ribonucleoside triphosphates as substrates. In Streptococcus uberis (strain ATCC BAA-854 / 0140J), this protein is DNA-directed RNA polymerase subunit beta.